We begin with the raw amino-acid sequence, 271 residues long: Na(+), Li(+), K(+)/H(+) antiporter subunit B (271 aa).

Helical transmembrane passes span 2–22, 36–56, 94–114, 130–150, 152–172, 193–213, and 216–236; these read ILLTIFWDTLLDILPIAAIIF, LPQVLAGFFMVWVGLSLFLVG, WVYLFAFAIGASTTIAEPSLI, PFMLRIAVALGMAFGITLGTW, IVMGWPLQWFVFAAYCLVIIQ, STITVPIIAALGLGLAASIPG, and ALMDGFGMIALACLFPIITVM. The interval 252 to 271 is disordered; that stretch reads TPHLSYSKAPPPSKGDNNAL.

The protein belongs to the UmpA/UmpB family. Heterodimer composed of UmpA and UmpB.

Its subcellular location is the cell membrane. In terms of biological role, part of a two-component antiporter that catalyzes the efflux of Na(+), Li(+) and K(+) in exchange for external protons. Shows a preference for Na(+), followed by K(+) and Li(+). This chain is Na(+), Li(+), K(+)/H(+) antiporter subunit B, found in Vreelandella zhaodongensis (Halomonas zhaodongensis).